Reading from the N-terminus, the 188-residue chain is MKVIASTLRKGNVVDKDGKLYVILTAENIHPGKGTPVTQLDMRRITDGVKISERYRTTEQVERAFVEDRDHTFLYQDGEGYHFMNPESYEQIAVPADVVGDAAPYLQEGMTVTLSTHNGVPLTIELPQRMTFEIVETEPVTKGQTASSSYKPALLSNGVKTSVPPHVSTGTRVVIMTADGSYVERAKD.

This sequence belongs to the elongation factor P family.

It is found in the cytoplasm. The protein operates within protein biosynthesis; polypeptide chain elongation. In terms of biological role, involved in peptide bond synthesis. Stimulates efficient translation and peptide-bond synthesis on native or reconstituted 70S ribosomes in vitro. Probably functions indirectly by altering the affinity of the ribosome for aminoacyl-tRNA, thus increasing their reactivity as acceptors for peptidyl transferase. In Methylorubrum extorquens (strain CM4 / NCIMB 13688) (Methylobacterium extorquens), this protein is Elongation factor P.